A 335-amino-acid chain; its full sequence is Mycobacterial beta-ketoacyl-[acyl-carrier-protein] synthase III (335 aa).

Active-site residues include Cys122 and His258. Residues 259 to 263 (QANSR) form an ACP-binding region. Asn289 is an active-site residue.

This sequence belongs to the thiolase-like superfamily. FabH family. Homodimer.

The protein resides in the cytoplasm. It catalyses the reaction malonyl-[ACP] + dodecanoyl-CoA + H(+) = 3-oxotetradecanoyl-[ACP] + CO2 + CoA. It participates in lipid metabolism; fatty acid biosynthesis. Its pathway is lipid metabolism; mycolic acid biosynthesis. In terms of biological role, catalyzes the condensation reaction of fatty acid synthesis by the addition to an acyl acceptor of two carbons from malonyl-ACP. Catalyzes the first condensation reaction which initiates fatty acid synthesis and may therefore play a role in governing the total rate of fatty acid production. Possesses both acetoacetyl-ACP synthase and acetyl transacylase activities. Its substrate specificity determines the biosynthesis of branched-chain and/or straight-chain of fatty acids. This Mycobacterium ulcerans (strain Agy99) protein is Mycobacterial beta-ketoacyl-[acyl-carrier-protein] synthase III.